The primary structure comprises 253 residues: DNA polymerase sliding clamp 2 (253 aa).

This sequence belongs to the PCNA family. As to quaternary structure, homotrimer. The subunits circularize to form a toroid; DNA passes through its center. Replication factor C (RFC) is required to load the toroid on the DNA. Interacts with TIP.

Inhibited by interaction with the PCNA inhibitor TIP. Functionally, sliding clamp subunit that acts as a moving platform for DNA processing. Responsible for tethering the catalytic subunit of DNA polymerase and other proteins to DNA during high-speed replication. The chain is DNA polymerase sliding clamp 2 from Thermococcus kodakarensis (strain ATCC BAA-918 / JCM 12380 / KOD1) (Pyrococcus kodakaraensis (strain KOD1)).